We begin with the raw amino-acid sequence, 1034 residues long: MALKKVKGNFFERMFDKNLTDLVRGIRNNKDNEAKYISTCIEEIKQELRQDNISVKCNAVAKLTYIQMLGYDISWAGFNIIEVMSSSRFTCKRIGYLAASQCFHPDSELLMLTTNMIRKDLNSQNQYDAGVALSGLSCFISPDLSRDLANDIMTLMSSTKPYLRMKAVLMMYKVFLRYPEALRPAFPKLKEKLEDPDPGVQSAAVNVICELARKNPKNYLPLAPIFFKLMTTSTNNWMLIKIIKLFGALTPLEPRLGKKLIEPLTNLIHSTSAMSLLYECINTVIAVLISISSGMPNHSASIQLCVQKLRILIEDSDQNLKYLGLLAMSKILKTHPKSVQAHKDLILACLDDKDESIRLRALDLLYGMVSKKNLMEIVKRLLGHMERAEGSAYRDELLYKVIEICAQSSYLYVTNFEWYLTVLVELIQLEAGSRHGRLIAEQLLDVAIRVPVVRQFAVNEMTNLLDTFTVSAQSNSMYEVLYAAAWIVGEFAGELEDAEKTLNILLRPRLLPGHIQGVYVQNVIKLFARLATTCLELQDLPGLVTLCDHVLDKLQHFNGSSDIEVQERANSACMLIEMLRNQLSTSTDAMAMDTTTEGGIPPLAIEIVQEMTLLFTGELIPVAPKAQRKVPLPDGLDLDEWINAPPPEDAASSSSSEHDKDELFVSATQAGTGADGGEKRRQSLELTPEQLERQRMARLIEQSNNPHYLKSTPTASGASNADQYDNIDDIPITELPLDMEGVAALRVGITKRSDKYLQEQQAAQGSKDGKKKHKKGKKSKKAKNKVAYNSSSESEGEPKPLHIVNTTLDMPEGVSMSDSEDKDGKYDPNDPHRALDIELDITEFEAPAVRSASKKSAADKENLKTPADLAGGGNAAKKDRKKDKDKDKERKVKREHRESKRERKEAAVQPVIDLIDADTPTPSPSHISATSNNNNTSTVLPDAPKHHKKKKNKEKTTDEAPDALATATGSSIIDVGGEEASEVASKVHKKKHKKEKSQRKEKKKASESASVSAIVSIGDYEQPLGISTPSKEIL.

HEAT repeat units follow at residues 35–72 (KYIS…LGYD), 143–180 (DLSR…RYPE), 181–217 (ALRP…KNPK), 219–255 (YLPL…LEPR), 258–297 (KKLI…GMPN), 299–337 (SASI…THPK), 338–374 (SVQA…KKNL), 376–414 (EIVK…LYVT), 415–452 (NFEW…RVPV), and 570–609 (NSAC…EIVQ). Disordered regions lie at residues 637-660 (DLDE…EHDK), 669-688 (QAGT…ELTP), 701-723 (EQSN…NADQ), and 758-1034 (QEQQ…KEIL). Position 683 is a phosphoserine (Ser-683). A Phosphothreonine modification is found at Thr-687. A compositionally biased stretch (basic residues) spans 769-784 (GKKKHKKGKKSKKAKN). 2 stretches are compositionally biased toward basic and acidic residues: residues 822 to 836 (KDGK…RALD) and 882 to 906 (KDKD…RKEA). A compositionally biased stretch (low complexity) spans 928–942 (SATSNNNNTSTVLPD). Basic residues predominate over residues 986–1003 (KVHKKKHKKEKSQRKEKK). Residues 1007–1016 (ESASVSAIVS) show a composition bias toward low complexity. Residues 1025–1034 (GISTPSKEIL) are compositionally biased toward polar residues.

It belongs to the adaptor complexes large subunit family. Adaptor protein complex 3 (AP-3) is a heterotetramer composed of two large chains (delta and beta3), a medium chain (mu3) and a small chain (sigma3).

Its subcellular location is the cytoplasmic vesicle. The protein resides in the clathrin-coated vesicle membrane. The protein localises to the golgi apparatus. Part of the AP-3 complex, an adapter-related complex which is not clathrin-associated. The complex is associated with the Golgi region as well as more peripheral structures. It facilitates the budding of vesicles from the Golgi membrane and may be directly involved in trafficking to lysosomes. In terms of biological role, may be a coat protein involved in the formation of specialized structures like pigment granules. The polypeptide is AP-3 complex subunit delta (g) (Drosophila melanogaster (Fruit fly)).